A 281-amino-acid chain; its full sequence is Orotidine 5'-phosphate decarboxylase (281 aa).

Residue K94 is the Proton donor of the active site.

It belongs to the OMP decarboxylase family. Type 2 subfamily.

The enzyme catalyses orotidine 5'-phosphate + H(+) = UMP + CO2. Its pathway is pyrimidine metabolism; UMP biosynthesis via de novo pathway; UMP from orotate: step 2/2. The sequence is that of Orotidine 5'-phosphate decarboxylase from Thermomicrobium roseum (strain ATCC 27502 / DSM 5159 / P-2).